A 294-amino-acid polypeptide reads, in one-letter code: Acetylglutamate kinase (294 aa).

Residues 63-64 (GG), Arg85, and Asn188 each bind substrate.

It belongs to the acetylglutamate kinase family. ArgB subfamily.

The protein resides in the cytoplasm. The enzyme catalyses N-acetyl-L-glutamate + ATP = N-acetyl-L-glutamyl 5-phosphate + ADP. Its pathway is amino-acid biosynthesis; L-arginine biosynthesis; N(2)-acetyl-L-ornithine from L-glutamate: step 2/4. In terms of biological role, catalyzes the ATP-dependent phosphorylation of N-acetyl-L-glutamate. The polypeptide is Acetylglutamate kinase (Methanococcus aeolicus (strain ATCC BAA-1280 / DSM 17508 / OCM 812 / Nankai-3)).